Here is a 447-residue protein sequence, read N- to C-terminus: N-succinylarginine dihydrolase (447 aa).

Residues 19–28, Asn110, and 137–138 each bind substrate; these read AGLSFGNEAS and HR. Residue Glu174 is part of the active site. Arg212 lines the substrate pocket. His248 is a catalytic residue. Asp250 and Asn359 together coordinate substrate. The Nucleophile role is filled by Cys365.

The protein belongs to the succinylarginine dihydrolase family. In terms of assembly, homodimer.

The enzyme catalyses N(2)-succinyl-L-arginine + 2 H2O + 2 H(+) = N(2)-succinyl-L-ornithine + 2 NH4(+) + CO2. It functions in the pathway amino-acid degradation; L-arginine degradation via AST pathway; L-glutamate and succinate from L-arginine: step 2/5. Its function is as follows. Catalyzes the hydrolysis of N(2)-succinylarginine into N(2)-succinylornithine, ammonia and CO(2). The sequence is that of N-succinylarginine dihydrolase from Salmonella typhi.